The chain runs to 474 residues: Cyclin-dependent kinase 18 (474 aa).

Phosphoserine occurs at positions 14, 74, 89, 98, 117, and 132. A disordered region spans residues 44-93 (NLQLGPLGRDPPQECSTFSPTDSGEEPGQLSPGVQFQRRQNQRRFSMEDV). Residues 144–425 (YVKLDKLGEG…AEAALSHSYF (282 aa)) enclose the Protein kinase domain. Residues 150–158 (LGEGTYATV) and lysine 173 contribute to the ATP site. The active-site Proton acceptor is the aspartate 265. A phosphoserine mark is found at serine 440 and serine 443.

The protein belongs to the protein kinase superfamily. CMGC Ser/Thr protein kinase family. CDC2/CDKX subfamily. Isoform 2 expression is limited to several subcortical nuclei of the basal gangli and the spinal cord. Isoform 1 is widely expressed.

The enzyme catalyses L-seryl-[protein] + ATP = O-phospho-L-seryl-[protein] + ADP + H(+). The catalysed reaction is L-threonyl-[protein] + ATP = O-phospho-L-threonyl-[protein] + ADP + H(+). Functionally, may play a role in signal transduction cascades in terminally differentiated cells. In Homo sapiens (Human), this protein is Cyclin-dependent kinase 18 (CDK18).